The chain runs to 477 residues: ATP synthase subunit beta (477 aa).

An ATP-binding site is contributed by 148–155; the sequence is GGAGVGKT.

Belongs to the ATPase alpha/beta chains family. In terms of assembly, F-type ATPases have 2 components, CF(1) - the catalytic core - and CF(0) - the membrane proton channel. CF(1) has five subunits: alpha(3), beta(3), gamma(1), delta(1), epsilon(1). CF(0) has three main subunits: a(1), b(2) and c(9-12). The alpha and beta chains form an alternating ring which encloses part of the gamma chain. CF(1) is attached to CF(0) by a central stalk formed by the gamma and epsilon chains, while a peripheral stalk is formed by the delta and b chains.

The protein resides in the cell inner membrane. The catalysed reaction is ATP + H2O + 4 H(+)(in) = ADP + phosphate + 5 H(+)(out). Produces ATP from ADP in the presence of a proton gradient across the membrane. The catalytic sites are hosted primarily by the beta subunits. This chain is ATP synthase subunit beta, found in Psychrobacter cryohalolentis (strain ATCC BAA-1226 / DSM 17306 / VKM B-2378 / K5).